Consider the following 546-residue polypeptide: Cation/calcium exchanger 5 (546 aa).

The next 13 helical transmembrane spans lie at 13 to 33, 88 to 108, 134 to 154, 163 to 183, 194 to 214, 218 to 238, 323 to 343, 356 to 376, 388 to 408, 423 to 445, 455 to 475, 492 to 512, and 522 to 542; these read ALCL…TTIP, NLFF…YILI, AVTL…VAAL, FGAI…FVAI, SFVR…YVYL, IFVW…GFVF, SANI…FVQL, LPLW…HFTV, VIVV…GELL, ALLG…DVAV, MAGC…SALV, VGIV…LLVI, and FWGI…LIIA.

Belongs to the Ca(2+):cation antiporter (CaCA) (TC 2.A.19) family. Cation/calcium exchanger (CCX) subfamily.

It localises to the cell membrane. Its function is as follows. Membrane-localized H(+)-dependent K(+) and Na(+) transporter. The polypeptide is Cation/calcium exchanger 5 (CCX5) (Arabidopsis thaliana (Mouse-ear cress)).